The chain runs to 359 residues: MGISFSNNNRRRDNNNRRHLHHYPPPPPYYYLDPPPPPPPFPPHYDYNYSNYHLSPPLPPQPQINSCSYGHYHYHPQPPQYFTTAQPNWWGPMMRPAYYCPPQPQTQPPKPYLEQQNAKKVRNDVNVHRDTVRLEVDDLVPGHHLVSFVFDALFDGSFTITFFAKEEPNCTIIPQFPEVYSPTRFHFQKGPGQKFLQPSGTGTDLSFFVLDDLSKPLEEDVYPLVISAETIISPNSISEQSSVHKQVTQAVLEKDNDGSFKVKVVKQILWIEGVRYELRELYGSTTQGAASGLDESGSGTECVICMTEAKDTAVLPCRHLCMCSDCAKELRLQSNKCPICRQPIEELLEIKMNSSDEQH.

The tract at residues 1–35 (MGISFSNNNRRRDNNNRRHLHHYPPPPPYYYLDPP) is disordered. Gly2 carries the N-myristoyl glycine lipid modification. The segment covering 23–35 (YPPPPPYYYLDPP) has biased composition (pro residues). The segment at 148 to 267 (FVFDALFDGS…GSFKVKVVKQ (120 aa)) is DAR2 domain. An RING-type zinc finger spans residues 302–341 (CVICMTEAKDTAVLPCRHLCMCSDCAKELRLQSNKCPICR).

The protein belongs to the RING-type zinc finger family. LOG2 subfamily.

The enzyme catalyses S-ubiquitinyl-[E2 ubiquitin-conjugating enzyme]-L-cysteine + [acceptor protein]-L-lysine = [E2 ubiquitin-conjugating enzyme]-L-cysteine + N(6)-ubiquitinyl-[acceptor protein]-L-lysine.. It participates in protein modification; protein ubiquitination. Acts as an E3 ubiquitin-protein ligase, or as part of E3 complex, which accepts ubiquitin from specific E2 ubiquitin-conjugating enzymes and then transfers it to substrates (in vitro). The polypeptide is Probable E3 ubiquitin-protein ligase LUL4 (LUL4) (Arabidopsis thaliana (Mouse-ear cress)).